Here is a 294-residue protein sequence, read N- to C-terminus: MEARNMTPFTYFSLPMQKLFLRNQAAVRNKPYAKYFRTEMRVPLSAVRKIQQGPMALEDTLTPSIEDINRLLEPDFVSEESGYALLPGPMAYVQSRKFFPGCTAQMFKWWFIWHPAESERYTLWFPYAHVSNPCVHHQRLCDESLSFEERLYGNTFCASEYVGDRLMHLHIDFQQPASLGLNTDLYREAKIDGSVSALMSLADHPEVPVSLMVHLFKEVPGGMYLTSRYWVGAHPSMARFPGAEKAASLLKENGFGEAELETLAYEFAVHDMCEFNHLASFLPDLYREFGTPAA.

Zn(2+) is bound by residues H129, E160, H270, and E274.

This sequence belongs to the DAPG/phloretin hydrolase family. As to quaternary structure, homodimer. It depends on Zn(2+) as a cofactor.

It catalyses the reaction 2,4-diacetylphloroglucinol + H2O = 2-acetylphloroglucinol + acetate. With respect to regulation, specifically and significantly activated by CoCl(2). Competitively inhibited by MAPG, but not by 2-hydroxy- and 4-hydroxyacetophenone. Functionally, hydrolase that specifically degrades the potent antimicrobial compound 2,4-diacetylphloroglucinol (DAPG) to equimolar amounts of mildly toxic monoacetylphloroglucinol (MAPG) and acetate. The polypeptide is 2,4-diacetylphloroglucinol hydrolase (Pseudomonas sp).